Consider the following 345-residue polypeptide: Phenylalanine--tRNA ligase alpha subunit (345 aa).

A Mg(2+)-binding site is contributed by Glu-266.

Belongs to the class-II aminoacyl-tRNA synthetase family. Phe-tRNA synthetase alpha subunit type 1 subfamily. In terms of assembly, tetramer of two alpha and two beta subunits. It depends on Mg(2+) as a cofactor.

It is found in the cytoplasm. The catalysed reaction is tRNA(Phe) + L-phenylalanine + ATP = L-phenylalanyl-tRNA(Phe) + AMP + diphosphate + H(+). The chain is Phenylalanine--tRNA ligase alpha subunit from Methylibium petroleiphilum (strain ATCC BAA-1232 / LMG 22953 / PM1).